The sequence spans 585 residues: Rab GTPase-binding effector protein 2 (585 aa).

Ala2 carries the N-acetylalanine modification. A coiled-coil region spans residues 27 to 183; sequence QEGAKVEAES…ELIQEIQRRP (157 aa). 3 disordered regions span residues 178–265, 381–408, and 491–515; these read EIQR…ASLV, ENQGLRAEQPSSSVPRVLEQDEGWEESL, and EEQSKAKRQEVLRPSQGTGRTEEAQ. Ser188, Ser192, Ser198, and Ser202 each carry phosphoserine. Residues 288-540 are a coiled coil; that stretch reads NQWEQLQLEG…QAELETSEQV (253 aa). Basic and acidic residues predominate over residues 491–501; the sequence is EEQSKAKRQEV.

Belongs to the rabaptin family. Heterodimer with RABGEF1. The dimer binds RAB5A that has been activated by GTP-binding. Interacts with SDCCAG8; this interaction is important for ciliogenesis regulation. Interacts with RAB4; this interaction may mediate VEGFR2 cell surface expression.

The protein resides in the cytoplasm. Its subcellular location is the early endosome. The protein localises to the cytoskeleton. It is found in the microtubule organizing center. It localises to the centrosome. The protein resides in the cilium basal body. In terms of biological role, plays a role in membrane trafficking and in homotypic early endosome fusion. Participates in arteriogenesis by regulating vascular endothelial growth factor receptor 2/VEGFR2 cell surface expression and endosomal trafficking. By interacting with SDCCAG8, localizes to centrosomes and plays a critical role in ciliogenesis. The polypeptide is Rab GTPase-binding effector protein 2 (RABEP2) (Bos taurus (Bovine)).